A 115-amino-acid polypeptide reads, in one-letter code: uncharacterized protein (115 aa).

This is an uncharacterized protein from Acidianus sp. F28 (AFV-2).